The sequence spans 129 residues: MAKTPVRARKRVKKQIADGVAHIHASFNNTIVTITDRQGNALAWATAGGSGFRGSRKSTPFAAQVAAERCAEAVKEFGLKNLEVMVKGPGPGRESTIRALNAAGFRITNITDVTPIPHNGCRPPKKRRV.

Belongs to the universal ribosomal protein uS11 family. Part of the 30S ribosomal subunit. Interacts with proteins S7 and S18. Binds to IF-3.

Located on the platform of the 30S subunit, it bridges several disparate RNA helices of the 16S rRNA. Forms part of the Shine-Dalgarno cleft in the 70S ribosome. The sequence is that of Small ribosomal subunit protein uS11 from Haemophilus ducreyi (strain 35000HP / ATCC 700724).